Here is a 70-residue protein sequence, read N- to C-terminus: MQVIEHKKSGKVHIPPENGKGLVLCGSRMIQDCQEMATFRDSQWLDDFPEDYGDSQKDCEKCAKITDFNE.

This is an uncharacterized protein from Haloarcula hispanica (His1V).